The primary structure comprises 250 residues: Uridylate kinase (250 aa).

Position 17 to 20 (17 to 20 (KLSG)) interacts with ATP. G59 provides a ligand contact to UMP. Residues G60 and R64 each coordinate ATP. Residues D79 and 140-147 (TGNPYFTT) each bind UMP. ATP-binding residues include T167, Y173, and D176.

Belongs to the UMP kinase family. As to quaternary structure, homohexamer.

The protein resides in the cytoplasm. The catalysed reaction is UMP + ATP = UDP + ADP. It participates in pyrimidine metabolism; CTP biosynthesis via de novo pathway; UDP from UMP (UMPK route): step 1/1. With respect to regulation, inhibited by UTP. Functionally, catalyzes the reversible phosphorylation of UMP to UDP. This chain is Uridylate kinase, found in Myxococcus xanthus (strain DK1622).